The primary structure comprises 379 residues: Oxysterol-binding protein-related protein 4C (379 aa).

It belongs to the OSBP family. As to expression, expressed in flowers.

Functionally, may be involved in the transport of sterols. In Arabidopsis thaliana (Mouse-ear cress), this protein is Oxysterol-binding protein-related protein 4C (ORP4C).